Here is a 144-residue protein sequence, read N- to C-terminus: Large ribosomal subunit protein uL15 (144 aa).

The tract at residues 1 to 49 (MKLNTLSPAAGAKSAAKRVGRGIGSGLGKTAGRGHKGQKSRSGGGVRVG) is disordered. The segment covering 21-31 (RGIGSGLGKTA) has biased composition (gly residues).

The protein belongs to the universal ribosomal protein uL15 family. In terms of assembly, part of the 50S ribosomal subunit.

Its function is as follows. Binds to the 23S rRNA. This chain is Large ribosomal subunit protein uL15, found in Shewanella loihica (strain ATCC BAA-1088 / PV-4).